The chain runs to 130 residues: Hypocretin neuropeptide precursor (130 aa).

Residues Met1–Ala32 form the signal peptide. The residue at position 33 (Gln33) is a Pyrrolidone carboxylic acid. Intrachain disulfides connect Cys38-Cys44 and Cys39-Cys46. At Leu65 the chain carries Leucine amide. Met96 is modified (methionine amide). Positions Gly97–Val130 are cleaved as a propeptide — removed in mature form.

It belongs to the orexin family. Post-translationally, specific enzymatic cleavages at paired basic residues yield the different active peptides.

It localises to the rough endoplasmic reticulum. The protein localises to the cytoplasmic vesicle. Its subcellular location is the synapse. Neuropeptides that play a significant role in the regulation of food intake and sleep-wakefulness, possibly by coordinating the complex behavioral and physiologic responses of these complementary homeostatic functions. A broader role in the homeostatic regulation of energy metabolism, autonomic function, hormonal balance and the regulation of body fluids, is also suggested. In terms of biological role, binds to orexin receptors HCRTR1/OX1R and HCRTR2/OX2R with a high affinity. Stimulates food intake. Modulates pituitary luteinizing hormone secretion in an ovarian steroid-dependent manner. Its function is as follows. Binds to orexin receptor HCRTR2/OX2R only. Stimulates food intake. Modulates pituitary luteinizing hormone secretion in an ovarian steroid-dependent manner. The protein is Hypocretin neuropeptide precursor (HCRT) of Canis lupus familiaris (Dog).